A 447-amino-acid chain; its full sequence is Elongation factor 1-alpha (447 aa).

In terms of domain architecture, tr-type G spans 5-230 (KTHINIVVIG…DQINEPKRPS (226 aa)). The G1 stretch occupies residues 14-21 (GHVDSGKS). Residue 14 to 21 (GHVDSGKS) coordinates GTP. An N6,N6-dimethyllysine modification is found at Lys55. Residues 70-74 (GITID) are G2. Lys79 carries the N6,N6,N6-trimethyllysine modification. Residues 91 to 94 (DAPG) form a G3 region. Residues 91–95 (DAPGH) and 153–156 (NKMD) contribute to the GTP site. Positions 153-156 (NKMD) are G4. Lys187 carries the post-translational modification N6,N6,N6-trimethyllysine. Positions 194–196 (SGF) are G5. An N6-methyllysine modification is found at Lys261. Glu289 carries the 5-glutamyl glycerylphosphorylethanolamine modification. N6,N6,N6-trimethyllysine is present on Lys306. Glu362 carries the post-translational modification 5-glutamyl glycerylphosphorylethanolamine. Residue Lys396 is modified to N6,N6,N6-trimethyllysine.

Belongs to the TRAFAC class translation factor GTPase superfamily. Classic translation factor GTPase family. EF-Tu/EF-1A subfamily.

The protein localises to the cytoplasm. Its function is as follows. This protein promotes the GTP-dependent binding of aminoacyl-tRNA to the A-site of ribosomes during protein biosynthesis. This chain is Elongation factor 1-alpha (REFA1), found in Oryza sativa subsp. japonica (Rice).